A 224-amino-acid polypeptide reads, in one-letter code: Small ribosomal subunit protein uS3 (224 aa).

In terms of domain architecture, KH type-2 spans 39–107 (VRKYIQNALA…PVHINIEEIR (69 aa)).

The protein belongs to the universal ribosomal protein uS3 family. Part of the 30S ribosomal subunit. Forms a tight complex with proteins S10 and S14.

Functionally, binds the lower part of the 30S subunit head. Binds mRNA in the 70S ribosome, positioning it for translation. In Saccharophagus degradans (strain 2-40 / ATCC 43961 / DSM 17024), this protein is Small ribosomal subunit protein uS3.